We begin with the raw amino-acid sequence, 451 residues long: Aminodeoxychorismate synthase component 1 (451 aa).

Residues Ser34, 41–44 (HNRF), and 238–240 (PFS) contribute to the L-tryptophan site. Glu256 (proton donor) is an active-site residue. Residue Lys272 is the N6-(4-deoxychorismate)-lysine intermediate of the active site.

Belongs to the anthranilate synthase component I family. As to quaternary structure, monomer. Heterodimer consisting of two non-identical subunits: a glutamine amidotransferase subunit (PabA) and a aminodeoxychorismate synthase subunit (PabB). Requires Mg(2+) as cofactor.

It carries out the reaction chorismate + L-glutamine = 4-amino-4-deoxychorismate + L-glutamate. It functions in the pathway cofactor biosynthesis; tetrahydrofolate biosynthesis; 4-aminobenzoate from chorismate: step 1/2. Functionally, part of a heterodimeric complex that catalyzes the two-step biosynthesis of 4-amino-4-deoxychorismate (ADC), a precursor of p-aminobenzoate (PABA) and tetrahydrofolate. In the first step, a glutamine amidotransferase (PabA) generates ammonia as a substrate that, along with chorismate, is used in the second step, catalyzed by aminodeoxychorismate synthase (PabB) to produce ADC. This Klebsiella aerogenes (Enterobacter aerogenes) protein is Aminodeoxychorismate synthase component 1 (pabB).